Here is a 402-residue protein sequence, read N- to C-terminus: Flavohemoprotein (402 aa).

Residues 1–138 form the Globin domain; the sequence is MLSPEVRALV…LADLLIGRER (138 aa). His-85 provides a ligand contact to heme b. Catalysis depends on charge relay system residues Tyr-95 and Glu-137. The reductase stretch occupies residues 149–402; that stretch reads GGWTGWRAFK…AEVFGTGGVA (254 aa). In terms of domain architecture, FAD-binding FR-type spans 152 to 261; sequence TGWRAFKVVR…SPPQGDFTLD (110 aa). FAD-binding positions include Tyr-190 and 206 to 209; that span reads RQYS. Position 274–279 (274–279) interacts with NADP(+); that stretch reads GVGLTP. Residue 395–398 coordinates FAD; the sequence is VFGT.

Belongs to the globin family. Two-domain flavohemoproteins subfamily. It in the C-terminal section; belongs to the flavoprotein pyridine nucleotide cytochrome reductase family. Heme b is required as a cofactor. FAD serves as cofactor.

The enzyme catalyses 2 nitric oxide + NADPH + 2 O2 = 2 nitrate + NADP(+) + H(+). It carries out the reaction 2 nitric oxide + NADH + 2 O2 = 2 nitrate + NAD(+) + H(+). Functionally, is involved in NO detoxification in an aerobic process, termed nitric oxide dioxygenase (NOD) reaction that utilizes O(2) and NAD(P)H to convert NO to nitrate, which protects the bacterium from various noxious nitrogen compounds. Therefore, plays a central role in the inducible response to nitrosative stress. The chain is Flavohemoprotein from Bordetella pertussis (strain Tohama I / ATCC BAA-589 / NCTC 13251).